The sequence spans 254 residues: tRNA (guanine-N(1)-)-methyltransferase (254 aa).

S-adenosyl-L-methionine-binding positions include Gly119 and 139-144 (IGDFVL).

The protein belongs to the RNA methyltransferase TrmD family. As to quaternary structure, homodimer.

It localises to the cytoplasm. The catalysed reaction is guanosine(37) in tRNA + S-adenosyl-L-methionine = N(1)-methylguanosine(37) in tRNA + S-adenosyl-L-homocysteine + H(+). Specifically methylates guanosine-37 in various tRNAs. The sequence is that of tRNA (guanine-N(1)-)-methyltransferase from Dechloromonas aromatica (strain RCB).